Here is a 295-residue protein sequence, read N- to C-terminus: Delta-1-pyrroline-5-carboxylate reductase apf3 (295 aa).

The protein belongs to the pyrroline-5-carboxylate reductase family.

It functions in the pathway secondary metabolite biosynthesis. Delta-1-pyrroline-5-carboxylate reductase; part of the gene cluster that mediates the biosynthesis of the cyclic tetrapeptide apicidin F (APF). The non-ribosomal peptide synthetase apf1 incorporates four different amino acids to produce apicidin F: L-phenylalanine, D-pipecolic acid (D-pip), N-methoxy-L-tryptophan and L-2-aminooctanedioic acid. L-Phenylalanine is the only proteinogenic amino acid directly used by apf1. The 3 other apf1 substrates are non-proteinogenic and have to be modified by other enzymes of the cluster. Lysine is converted to delta-1-pyrroline-5-carboxylate (P5C) which is reduced to L-pipecolic acid (L-pip) by apf3. L-pip is epimerized to D-pip, probably by apf1 activity, prior to incorporation. L-Tryptophan is N-oxidyzed by one of the cytochrome P450 monooxygenases (apf7 or apf8), and further methylated at the hydroxy group by the O-methyltransferase apf6 to yield N-methoxy-L-tryptophan. The synthesis of the fourth apf1 substrate is more complex. The fatty acid synthase apf5 is involved in the synthesis of the octanoic acid backbone of L-2-aminooctanedioic acid by fixing one acetyl-CoA unit and three malonyl-CoA units. Then one of the cytochrome P450 monooxygenases (apf7 or apf8) may oxidize this backbone to 2-oxooctanoic acid. The aminotransferase apf4 is predicted to catalyze the exchange of the keto group with an amino group. The next step would be the oxidation of 2-aminooctanoic acid by one of the cytochrome P450 monooxygenases (apf7 or apf8). The last step is the oxidation of 2-amino-8-hydroxyoctanoic acid to 2-aminooctanedioic acid is catalyzed by the FAD-dependent monooxygenase apf9. The protein is Delta-1-pyrroline-5-carboxylate reductase apf3 of Gibberella fujikuroi (strain CBS 195.34 / IMI 58289 / NRRL A-6831) (Bakanae and foot rot disease fungus).